We begin with the raw amino-acid sequence, 357 residues long: MTTPQDIIRRDVLAMTSYPVPDASGFVKLDAMENPYPLPEPLAAALGERLAQVALNRYPAPRPAALLDKLRHAMGVPAGCEVLLGNGSDEIISMMSMACAKPGAKVLAPVPGFVMYELSAKLAQLEFVGVPLKADLTLDVDAMLAAIAEHRPAIVYLAYPNNPTGTLYDDADIERIVAAARHSLIVIDEAYQPFAVRSWLPRAAEFDNVVVMRTVSKLGLAGIRLGYLVGSPAWLTEFDKVRPPYNINVLTQATADFLLDHLDVLDAQAADLRAERTRLAQEVAALPGTTVFPSAGNFLLVRVPDAAAVFDALLTERVLVKNVSKMHPLLAECVRLTVGSPDENARLLAALKLALPG.

Position 217 is an N6-(pyridoxal phosphate)lysine (lysine 217).

The protein belongs to the class-II pyridoxal-phosphate-dependent aminotransferase family. Histidinol-phosphate aminotransferase subfamily. Homodimer. It depends on pyridoxal 5'-phosphate as a cofactor.

The catalysed reaction is L-histidinol phosphate + 2-oxoglutarate = 3-(imidazol-4-yl)-2-oxopropyl phosphate + L-glutamate. Its pathway is amino-acid biosynthesis; L-histidine biosynthesis; L-histidine from 5-phospho-alpha-D-ribose 1-diphosphate: step 7/9. The sequence is that of Histidinol-phosphate aminotransferase 1 from Burkholderia lata (strain ATCC 17760 / DSM 23089 / LMG 22485 / NCIMB 9086 / R18194 / 383).